The chain runs to 548 residues: Spindle pole body-associated protein cut12 (548 aa).

The segment at 122–325 is interaction with plo1; the sequence is FKSPLLQSTP…GQQSKYKGKE (204 aa). Residues 123–182 are disordered; the sequence is KSPLLQSTPKPNINNPDNENKSKHDEFDNRYNININESYKNETKSNQRLGEDVPSKKKYP. The span at 126 to 139 shows a compositional bias: polar residues; the sequence is LLQSTPKPNINNPD. Composition is skewed to basic and acidic residues over residues 140–151 and 161–182; these read NENKSKHDEFDN and YKNE…KKYP. Residues 261–312 are a coiled coil; sequence KQKFSMLDSAHSDLELELTSIRERLESLILEKQEEINFWKQRCRALETEKIH. Residues 344-356 are compositionally biased toward polar residues; sequence PITTKVVSRPSQS. 2 disordered regions span residues 344-369 and 510-548; these read PITT…PSKN and SRVD…QLNS. Residues 522–548 adopt a coiled-coil conformation; sequence RTANAKKRLEERRRRRKLKLQELQLNS.

Self-associates. Interacts with plo1.

It localises to the cytoplasm. It is found in the cytoskeleton. The protein localises to the microtubule organizing center. The protein resides in the spindle pole body. Functionally, required for bipolar spindle formation. May act as a regulator of the p34cdc2/cyclin B kinase. Required for full activation of the plo1 kinase. However, in cut12.1 cells at restrictive temperature the H1 kinase does rise concomitant with entry into mitosis, indicating that cut12 is not required for activation of p34cdc2/cyclin B. The cut12.s11 allele may promote cdc2-independent phosphorylation of SPB proteins thereby overcoming the requirement for cdc25 in cell cycle progression. The sequence is that of Spindle pole body-associated protein cut12 (cut12) from Schizosaccharomyces pombe (strain 972 / ATCC 24843) (Fission yeast).